Here is a 517-residue protein sequence, read N- to C-terminus: Gamma-1-syntrophin (517 aa).

Positions 57-140 (TVTIRRQTVG…EVTLTVSFLK (84 aa)) constitute a PDZ domain. Positions 283-390 (QIVYMGWCEA…WERAFQTATF (108 aa)) constitute a PH domain.

The protein belongs to the syntrophin family. In terms of assembly, isoform 1, but not isoform 2, interacts with the dystrophin protein DMD and related proteins DTNA and DTNB. Interacts with DGKZ. In terms of tissue distribution, brain specific. In CNS, it is expressed in the perikaryon and proximal portion of the neuronal processes. Strong expression in the hippocampus, neuron-rich dendate granule cells, and pyramidal cell layers. Highly expressed in neurons of the cerebral cortex. Also expressed in the cerebellar cortex, deep cerebellar nuclei, thalamus, and basal ganglia. No expression in muscle cells.

It is found in the cytoplasm. Its subcellular location is the cytoskeleton. The protein resides in the nucleus. In terms of biological role, adapter protein that binds to and probably organizes the subcellular localization of a variety of proteins. May link various receptors to the actin cytoskeleton and the dystrophin glycoprotein complex. May participate in regulating the subcellular location of diacylglycerol kinase-zeta to ensure that diacylglycerol is rapidly inactivated following receptor activation. In Homo sapiens (Human), this protein is Gamma-1-syntrophin (SNTG1).